The sequence spans 64 residues: Large ribosomal subunit protein bL28 (64 aa).

The protein belongs to the bacterial ribosomal protein bL28 family.

The chain is Large ribosomal subunit protein bL28 from Bifidobacterium adolescentis (strain ATCC 15703 / DSM 20083 / NCTC 11814 / E194a).